We begin with the raw amino-acid sequence, 178 residues long: ATP-dependent protease subunit HslV (178 aa).

The active site involves threonine 7. Na(+) contacts are provided by glycine 162, cysteine 165, and threonine 168.

The protein belongs to the peptidase T1B family. HslV subfamily. As to quaternary structure, a double ring-shaped homohexamer of HslV is capped on each side by a ring-shaped HslU homohexamer. The assembly of the HslU/HslV complex is dependent on binding of ATP.

It is found in the cytoplasm. It catalyses the reaction ATP-dependent cleavage of peptide bonds with broad specificity.. With respect to regulation, allosterically activated by HslU binding. Protease subunit of a proteasome-like degradation complex believed to be a general protein degrading machinery. This is ATP-dependent protease subunit HslV from Burkholderia vietnamiensis (strain G4 / LMG 22486) (Burkholderia cepacia (strain R1808)).